Consider the following 476-residue polypeptide: MSTQLQHARDGTVTDAMRRVADREGRDPEVVREAVADGHAVIPANHHHDALDPMIIGRDFATKVNANIGNSDTTGDIDDELEKLHTAVHYGADTVMDLSTGENLDGIRTANIDNSPVPVGTVPIYEAVTRVEDVTDITPDLLIDVVEKQAKQGVDYMTLHAGVLAEHLPLTDDRTTGIVSRGGSILSQWMTEHGEQNPLYTHYDELCEILQAHDVTISLGDGLRPGSVADASDDAQFAELDTLGELTRRAWDHGVQAMVEGPGHVPMDQIRANVDRQQEVCDGAPFYVLGPLVTDIAPGYDHITSAIGATEAARAGAAMLCYVTPKEHLGLPDAEDVRDGMAAYRIAAHAGDVAAGKPGARDWDDALSEARYNFDWNRQFDLALDPERAQAFHDQTLPGDNYKDARFCSMCGVDFCSMRIDQDARDAGDDADDMTELTTETDLSESAAAEVNRPPTGTHDAPAAEQAPSPGDDDDD.

Residues 1–27 form a disordered region; that stretch reads MSTQLQHARDGTVTDAMRRVADREGRD. Basic and acidic residues predominate over residues 7-27; sequence HARDGTVTDAMRRVADREGRD. Substrate contacts are provided by residues Asn-67, Met-96, Tyr-125, His-160, 180-182, 221-224, and Glu-260; these read SRG and DGLR. His-264 contributes to the Zn(2+) binding site. Tyr-287 is a binding site for substrate. His-328 is a binding site for Zn(2+). Residues Cys-408, Cys-411, and Cys-416 each coordinate [4Fe-4S] cluster. The tract at residues 425 to 476 is disordered; the sequence is RDAGDDADDMTELTTETDLSESAAAEVNRPPTGTHDAPAAEQAPSPGDDDDD. Low complexity predominate over residues 436–447; the sequence is ELTTETDLSESA.

The protein belongs to the ThiC family. Requires [4Fe-4S] cluster as cofactor.

The enzyme catalyses 5-amino-1-(5-phospho-beta-D-ribosyl)imidazole + S-adenosyl-L-methionine = 4-amino-2-methyl-5-(phosphooxymethyl)pyrimidine + CO + 5'-deoxyadenosine + formate + L-methionine + 3 H(+). The protein operates within cofactor biosynthesis; thiamine diphosphate biosynthesis. Functionally, catalyzes the synthesis of the hydroxymethylpyrimidine phosphate (HMP-P) moiety of thiamine from aminoimidazole ribotide (AIR) in a radical S-adenosyl-L-methionine (SAM)-dependent reaction. The protein is Phosphomethylpyrimidine synthase of Halobacterium salinarum (strain ATCC 29341 / DSM 671 / R1).